We begin with the raw amino-acid sequence, 76 residues long: Sec-independent protein translocase protein TatA (76 aa).

The chain crosses the membrane as a helical span at residues 1 to 21 (MGGISIWQLLIIVAIIVLLFG). The tract at residues 43–76 (MADDKSQPQDASFEKVEAKEAASTEQKAKEKEQA) is disordered.

It belongs to the TatA/E family. The Tat system comprises two distinct complexes: a TatABC complex, containing multiple copies of TatA, TatB and TatC subunits, and a separate TatA complex, containing only TatA subunits. Substrates initially bind to the TatABC complex, which probably triggers association of the separate TatA complex to form the active translocon.

The protein localises to the cell inner membrane. Functionally, part of the twin-arginine translocation (Tat) system that transports large folded proteins containing a characteristic twin-arginine motif in their signal peptide across membranes. TatA could form the protein-conducting channel of the Tat system. This Actinobacillus pleuropneumoniae serotype 5b (strain L20) protein is Sec-independent protein translocase protein TatA.